A 289-amino-acid polypeptide reads, in one-letter code: MVLLAVGELSASLSLLEECWHYLFLGIIQGLTEFFPISSTAHLKVIPLLLSWDDPGVAVTASLQLGSIIALIAYFWNDLAFLMRGISKASFQNSWNNQNTKLASAIVLGTLPIVFAGMLIKLFWQGYETSPIRSIPAIAVVSIVMALLLLIAENVGRRTRNFENLSFWDGQIIGFSQVLALIPGVSRSGITITTALMIGWERKSAARFSFLLGIPAITLAGLVELKQAFGSFELVDVFPLLLGITSSAISSWIAIDCLMKFLQTQSMMIFITYRFLFGTLLLFWYYLAF.

8 helical membrane-spanning segments follow: residues 23–43 (LFLG…TAHL), 56–76 (GVAV…AYFW), 104–124 (SAIV…KLFW), 135–155 (IPAI…AENV), 165–185 (LSFW…IPGV), 210–230 (FLLG…QAFG), 235–255 (VDVF…WIAI), and 269–289 (IFIT…YLAF).

This sequence belongs to the UppP family.

It is found in the cell inner membrane. It catalyses the reaction di-trans,octa-cis-undecaprenyl diphosphate + H2O = di-trans,octa-cis-undecaprenyl phosphate + phosphate + H(+). Functionally, catalyzes the dephosphorylation of undecaprenyl diphosphate (UPP). Confers resistance to bacitracin. This chain is Undecaprenyl-diphosphatase, found in Prochlorococcus marinus (strain SARG / CCMP1375 / SS120).